The primary structure comprises 1437 residues: Histone-lysine N-methyltransferase NSD3 (1437 aa).

Disordered regions lie at residues 121 to 157 (PHEILEKPSPPQPPPPPSVPQTVIPKKTGSPEIKLKI) and 181 to 252 (QASE…PVQP). A compositionally biased stretch (pro residues) spans 128–139 (PSPPQPPPPPSV). Position 150 is a phosphoserine (serine 150). The KIKL signature appears at 154-157 (KLKI). Residues 187-201 (KSKHESRKEKRKKSN) show a composition bias toward basic residues. Residues 202–248 (KHDSSRSEERKSHKIPKLEPEEQNRPNERVDTVSEKPREEPVLKEEA) show a composition bias toward basic and acidic residues. Glycyl lysine isopeptide (Lys-Gly) (interchain with G-Cter in SUMO2) cross-links involve residues lysine 218 and lysine 245. The PWWP 1 domain occupies 270-333 (VGDLVWSKVG…EKRVREYKGH (64 aa)). Disordered stretches follow at residues 344–365 (TKQASNHSEKQKIRKPRPQRER) and 406–465 (AKKS…EPPP). Lysine 413 is covalently cross-linked (Glycyl lysine isopeptide (Lys-Gly) (interchain with G-Cter in SUMO2)). The span at 425–445 (VLNTQPEQTNAGEVASSLSST) shows a compositional bias: polar residues. At serine 457 the chain carries Phosphoserine. Residues lysine 502 and lysine 532 each participate in a glycyl lysine isopeptide (Lys-Gly) (interchain with G-Cter in SUMO2) cross-link. The segment at 540–696 (QDRLIISTPN…DSSLSRRGTG (157 aa)) is disordered. Residues 546-571 (STPNQRNEKPTQSVSSPEATSGSTGS) are compositionally biased toward polar residues. The span at 583-595 (TRSESEKSTEVVP) shows a compositional bias: basic and acidic residues. Residues serine 585, serine 587, and serine 590 each carry the phosphoserine modification. Residue lysine 628 forms a Glycyl lysine isopeptide (Lys-Gly) (interchain with G-Cter in SUMO2) linkage. Serine 655 carries the phosphoserine modification. A compositionally biased stretch (polar residues) spans 682–692 (DVQSMDSSLSR). 3 PHD-type zinc fingers span residues 701-748 (DTVC…CKTG), 749-805 (QHPC…CSME), and 862-955 (VGFC…CKAG). Lysine 790 carries the post-translational modification N6-acetyllysine. The 63-residue stretch at 960-1022 (YKQIVWVKLG…QGRVFPYVEG (63 aa)) folds into the PWWP 2 domain. Residues 1033–1069 (INKTFKKALEEAAKRFQELKAQRESKEALEIEKNSRK) are a coiled coil. Residues 1093–1143 (SEIPRCNCKPADENPCGLESECLNRMLQYECHPQVCPAGDRCQNQCFTKRL) form the AWS domain. The SET domain occupies 1145–1262 (PDAEIIKTER…AGMELTFNYN (118 aa)). Lysine 1151 participates in a covalent cross-link: Glycyl lysine isopeptide (Lys-Gly) (interchain with G-Cter in SUMO2). The region spanning 1269 to 1285 (GRTECHCGADNCSGFLG) is the Post-SET domain. The segment at 1321–1368 (EDYCFQCGDGGELVMCDKKDCPKAYHLLCLNLTQPPYGKWECPWHQCD) adopts a PHD-type 4; atypical zinc-finger fold.

The protein belongs to the class V-like SAM-binding methyltransferase superfamily. Histone-lysine methyltransferase family. SET2 subfamily. As to quaternary structure, interacts with BRD4. Interacts (via KIKL motif) with BRD3 (via NET domain). In terms of tissue distribution, highly expressed in brain, heart and skeletal muscle. Expressed at lower level in liver and lung.

The protein resides in the nucleus. The protein localises to the chromosome. It catalyses the reaction L-lysyl(4)-[histone H3] + 2 S-adenosyl-L-methionine = N(6),N(6)-dimethyl-L-lysyl(4)-[histone H3] + 2 S-adenosyl-L-homocysteine + 2 H(+). The catalysed reaction is L-lysyl(27)-[histone H3] + 2 S-adenosyl-L-methionine = N(6),N(6)-dimethyl-L-lysyl(27)-[histone H3] + 2 S-adenosyl-L-homocysteine + 2 H(+). Its function is as follows. Histone methyltransferase. Preferentially dimethylates 'Lys-4' and 'Lys-27' of histone H3 forming H3K4me2 and H3K27me2. H3 'Lys-4' methylation represents a specific tag for epigenetic transcriptional activation, while 'Lys-27' is a mark for transcriptional repression. In Homo sapiens (Human), this protein is Histone-lysine N-methyltransferase NSD3.